Consider the following 302-residue polypeptide: MDQQRLTHLRQLEAESIHIIREVAAEFANPVMMYSIGKDSSVMLHLARKAFYPGTLPFPLLHVDTGWKFREMYEFRDRMVKNIGAELLVHRNPEGLAMGINPFVHGSAKHTDIMKTEGLKQALDKYGFDAAFGGARRDEEKSRAKERIYSFRDRFHRWDPKNQRPELWHNYNGQVNKGESIRVFPLSNWTELDIWQYIFLENIEIVPLYLAAPRPVLERDGMLMMIDDDRINLQPGEVIEQRMVRFRTLGCWPLTGAVESEAQTLPGIIEEMLVSTTSERQGRMIDRDQAGSMELKKRQGYF.

It belongs to the PAPS reductase family. CysD subfamily. In terms of assembly, heterodimer composed of CysD, the smaller subunit, and CysN.

It catalyses the reaction sulfate + ATP + H(+) = adenosine 5'-phosphosulfate + diphosphate. It participates in sulfur metabolism; hydrogen sulfide biosynthesis; sulfite from sulfate: step 1/3. With CysN forms the ATP sulfurylase (ATPS) that catalyzes the adenylation of sulfate producing adenosine 5'-phosphosulfate (APS) and diphosphate, the first enzymatic step in sulfur assimilation pathway. APS synthesis involves the formation of a high-energy phosphoric-sulfuric acid anhydride bond driven by GTP hydrolysis by CysN coupled to ATP hydrolysis by CysD. The polypeptide is Sulfate adenylyltransferase subunit 2 (Erwinia tasmaniensis (strain DSM 17950 / CFBP 7177 / CIP 109463 / NCPPB 4357 / Et1/99)).